A 583-amino-acid chain; its full sequence is Isocitrate dehydrogenase kinase/phosphatase (583 aa).

ATP-binding positions include 315 to 321 (APGIRGM) and K336. D371 is an active-site residue.

Belongs to the AceK family.

The protein localises to the cytoplasm. The catalysed reaction is L-seryl-[isocitrate dehydrogenase] + ATP = O-phospho-L-seryl-[isocitrate dehydrogenase] + ADP + H(+). In terms of biological role, bifunctional enzyme which can phosphorylate or dephosphorylate isocitrate dehydrogenase (IDH) on a specific serine residue. This is a regulatory mechanism which enables bacteria to bypass the Krebs cycle via the glyoxylate shunt in response to the source of carbon. When bacteria are grown on glucose, IDH is fully active and unphosphorylated, but when grown on acetate or ethanol, the activity of IDH declines drastically concomitant with its phosphorylation. In Salmonella heidelberg (strain SL476), this protein is Isocitrate dehydrogenase kinase/phosphatase.